The chain runs to 396 residues: Actin-related protein 6 (396 aa).

Residue Thr-2 is modified to N-acetylthreonine. At Lys-260 the chain carries N6-acetyllysine.

This sequence belongs to the actin family. ARP6 subfamily. In terms of assembly, component of the chromatin-remodeling SRCAP complex composed of at least SRCAP, DMAP1, RUVBL1, RUVBL2, ACTL6A, YEATS4, ACTR6 and ZNHIT1. Interacts with CBX1, CBX3 and CBX5.

It is found in the cytoplasm. The protein resides in the cytoskeleton. The protein localises to the nucleus. It localises to the nucleolus. Its function is as follows. Required for formation and/or maintenance of proper nucleolar structure and function. Plays a dual role in the regulation of ribosomal DNA (rDNA) transcription. In the presence of high glucose, maintains active rDNA transcription through H2A.Z deposition and under glucose starvation, is required for the repression of rDNA transcription, and this function may be independent of H2A.Z. In Mus musculus (Mouse), this protein is Actin-related protein 6 (Actr6).